The sequence spans 479 residues: Serine protease HTRA1A (479 aa).

Residues 1 to 18 (MILVTLFCICALVTSLQA) form the signal peptide. Residues 27 to 111 (VIGGCPSHCD…RGKQGVCVCK (85 aa)) enclose the IGFBP N-terminal domain. 6 disulfide bridges follow: cysteine 31–cysteine 56, cysteine 35–cysteine 58, cysteine 40–cysteine 59, cysteine 47–cysteine 62, cysteine 70–cysteine 87, and cysteine 81–cysteine 108. Positions 96–155 (SATVRRRGKQGVCVCKSSDPVCGSDGVSYRDICELKRVSNRAQSLQQPPVLFIQRGACGT) constitute a Kazal-like domain. A serine protease region spans residues 203 to 363 (GSGFVVSDDG…IPSDKIRQFL (161 aa)). Residues histidine 219, aspartate 249, and serine 327 each act as charge relay system in the active site. Residues 364 to 466 (AESYDRLARG…LRVVVRRGNE (103 aa)) form the PDZ domain.

The protein belongs to the peptidase S1C family. In terms of assembly, forms homotrimers. In the presence of substrate, may form higher-order multimers in a PDZ-independent manner.

It is found in the secreted. Its subcellular location is the cytoplasm. The protein localises to the cytosol. Serine protease with a variety of targets, including extracellular matrix proteins and proteoglycans. Through cleavage of proteoglycans, may release soluble FGF-glycosaminoglycan complexes that promote the range and intensity of FGF signals in the extracellular space. Regulates the availability of insulin-like growth factors (IGFs) by cleaving IGF-binding proteins. Inhibits signaling mediated by TGF-beta family members. Consequently, may regulate many physiological processes. Intracellularly, degrades TSC2, leading to the activation of TSC2 downstream targets. The protein is Serine protease HTRA1A (htra1a) of Danio rerio (Zebrafish).